The primary structure comprises 352 residues: DNA polymerase IV (352 aa).

The 181-residue stretch at 6–186 (IIHIDMDAFY…LPLGKIPGVG (181 aa)) folds into the UmuC domain. Residues aspartate 10 and aspartate 104 each coordinate Mg(2+). The active site involves glutamate 105.

Belongs to the DNA polymerase type-Y family. As to quaternary structure, monomer. Mg(2+) is required as a cofactor.

It localises to the cytoplasm. It carries out the reaction DNA(n) + a 2'-deoxyribonucleoside 5'-triphosphate = DNA(n+1) + diphosphate. Its function is as follows. Poorly processive, error-prone DNA polymerase involved in untargeted mutagenesis. Copies undamaged DNA at stalled replication forks, which arise in vivo from mismatched or misaligned primer ends. These misaligned primers can be extended by PolIV. Exhibits no 3'-5' exonuclease (proofreading) activity. May be involved in translesional synthesis, in conjunction with the beta clamp from PolIII. The sequence is that of DNA polymerase IV from Neisseria meningitidis serogroup A / serotype 4A (strain DSM 15465 / Z2491).